Consider the following 186-residue polypeptide: Elongation factor P (186 aa).

This sequence belongs to the elongation factor P family.

The protein resides in the cytoplasm. It participates in protein biosynthesis; polypeptide chain elongation. Functionally, involved in peptide bond synthesis. Stimulates efficient translation and peptide-bond synthesis on native or reconstituted 70S ribosomes in vitro. Probably functions indirectly by altering the affinity of the ribosome for aminoacyl-tRNA, thus increasing their reactivity as acceptors for peptidyl transferase. This Prochlorococcus marinus (strain MIT 9301) protein is Elongation factor P.